Here is a 933-residue protein sequence, read N- to C-terminus: Neuronal PAS domain-containing protein 4A (933 aa).

The segment at 1 to 13 (MYRSTKGASKARR) is basic motif; degenerate. A bHLH domain is found at 1 to 53 (MYRSTKGASKARRDQINAEIRNLKDLLPISDADKSRLSYLHIMSLACMYTRKS). The tract at residues 14–53 (DQINAEIRNLKDLLPISDADKSRLSYLHIMSLACMYTRKS) is helix-loop-helix motif. PAS domains are found at residues 74–148 (SFYE…PDTD) and 220–290 (TSAS…LREG). One can recognise a PAC domain in the interval 295-334 (AEMVVRVETADHSWVWLYMVLQLETGETPIVSNNYIISET). Residues 361 to 398 (QESVSLQSPETLSSPDQVFTPGSSGLSGQSFDFSTAAC) show a composition bias toward polar residues. 3 disordered regions span residues 361–451 (QESV…ASSP), 514–573 (GSNF…LSSL), and 750–776 (DLSS…PSTP). 4 stretches are compositionally biased toward low complexity: residues 399 to 411 (STGS…GSSS), 440 to 451 (EPMASPSSASSP), 538 to 560 (GQTA…SNPQ), and 751 to 769 (LSSS…HSSP).

In terms of assembly, efficient DNA binding requires dimerization with another bHLH protein. Brain-specific.

The protein localises to the nucleus. In terms of biological role, transcription factor expressed in neurons of the brain that regulates the excitatory-inhibitory balance within neural circuits and is required for contextual memory in the hippocampus. Plays a key role in the structural and functional plasticity of neurons. Acts as an early-response transcription factor in both excitatory and inhibitory neurons, where it induces distinct but overlapping sets of late-response genes in these two types of neurons, allowing the synapses that form on inhibitory and excitatory neurons to be modified by neuronal activity in a manner specific to their function within a circuit, thereby facilitating appropriate circuit responses to sensory experience. The protein is Neuronal PAS domain-containing protein 4A (npas4a) of Danio rerio (Zebrafish).